A 372-amino-acid polypeptide reads, in one-letter code: Probable E3 ubiquitin-protein ligase makorin-1 (372 aa).

2 C3H1-type zinc fingers span residues 20–45 (KHVT…HDLT) and 48–75 (KPAA…HCKP). Residues 78 to 110 (NEEFSSPQMLPPSSPSPSTDPESSQPAPRPKTQ) are disordered. The span at 93-103 (SPSTDPESSQP) shows a compositional bias: low complexity. The segment at 153-180 (ALRKQLCPYAAVGECRYGINCAYLHGDV) adopts a C3H1-type 3 zinc-finger fold. The tract at residues 181–208 (CDMCGLQVLHPTDNSQRSQHTKACIEAH) is makorin-type Cys-His. The RING-type zinc-finger motif lies at 226 to 280 (CGVCMEVVFEKANPSERRFGILSNCNHCYCLKCIRKWRSAKQFESKIIKSCPECR). The segment at 309-338 (GMGRKPCRYFDEGRGICPFGANCFYKHAFP) adopts a C3H1-type 4 zinc-finger fold.

It carries out the reaction S-ubiquitinyl-[E2 ubiquitin-conjugating enzyme]-L-cysteine + [acceptor protein]-L-lysine = [E2 ubiquitin-conjugating enzyme]-L-cysteine + N(6)-ubiquitinyl-[acceptor protein]-L-lysine.. Its pathway is protein modification; protein ubiquitination. In terms of biological role, E3 ubiquitin ligase catalyzing the covalent attachment of ubiquitin moieties onto substrate proteins. This chain is Probable E3 ubiquitin-protein ligase makorin-1, found in Tetraodon nigroviridis (Spotted green pufferfish).